The following is a 1015-amino-acid chain: MDVSRRQFFKICAGGMAGTTVAALGFAPKQALAQARNYKLLRAKEIRNTCTYCSVGCGLLMYSLGDGAKNAREAIYHIEGDPDHPVSRGALCPKGAGLLDYVNSENRLRYPEYRAPGSDKWQRISWEEAFSRIAKLMKADRDANFIEKNEQGVTVNRWLSTGMLCASGASNETGMLTQKFARSLGMLAVDNQARVUHGPTVASLAPTFGRGAMTNHWVDIKNANVVMVMGGNAAEAHPVGFRWAMEAKNNNDATLIVVDPRFTRTASVADIYAPIRSGTDITFLSGVLRYLIENNKINAEYVKHYTNASLLVRDDFAFEDGLFSGYDAEKRQYDKSSWNYQLDENGYAKRDETLTHPRCVWNLLKEHVSRYTPDVVENICGTPKADFLKVCEVLASTSAPDRTTTFLYALGWTQHTVGAQNIRTMAMIQLLLGNMGMAGGGVNALRGHSNIQGLTDLGLLSTSLPGYLTLPSEKQVDLQSYLEANTPKATLADQVNYWSNYPKFFVSLMKSFYGDAAQKENNWGYDWLPKWDQTYDVIKYFNMMDEGKVTGYFCQGFNPVASFPDKNKVVSCLSKLKYMVVIDPLVTETSTFWQNHGESNDVDPASIQTEVFRLPSTCFAEEDGSIANSGRWLQWHWKGQDAPGEARNDGEILAGIYHHLRELYQSEGGKGVEPLMKMSWNYKQPHEPQSDEVAKENNGYALEDLYDANGVLIAKKGQLLSSFAHLRDDGTTASSCWIYTGSWTEQGNQMANRDNSDPSGLGNTLGWAWAWPLNRRVLYNRASADINGKPWDPKRMLIQWNGSKWTGNDIPDFGNAAPGTPTGPFIMQPEGMGRLFAINKMAEGPFPEHYEPIETPLGTNPLHPNVVSNPVVRLYEQDALRMGKKEQFPYVGTTYRLTEHFHTWTKHALLNAIAQPEQFVEISETLAAAKGINNGDRVTVSSKRGFIRAVAVVTRRLKPLNVNGQQVETVGIPIHWGFEGVARKGYIANTLTPNVGDANSQTPEYKAFLVNIEKA.

A signal peptide (tat-type signal) is located at residues 1-33; that stretch reads MDVSRRQFFKICAGGMAGTTVAALGFAPKQALA. The 4Fe-4S Mo/W bis-MGD-type domain maps to 43–106; it reads AKEIRNTCTY…GLLDYVNSEN (64 aa). Positions 50, 53, 57, and 92 each coordinate [4Fe-4S] cluster. Selenocysteine 196 contacts Mo-bis(molybdopterin guanine dinucleotide). Residue selenocysteine 196 is a non-standard amino acid, selenocysteine.

The protein belongs to the prokaryotic molybdopterin-containing oxidoreductase family. As to quaternary structure, trimer of heterotrimers, consisting of subunits alpha, beta and gamma. Mo-bis(molybdopterin guanine dinucleotide) serves as cofactor. The cofactor is [4Fe-4S] cluster. In terms of processing, exported by the Tat system. The position of the signal peptide cleavage has not been experimentally proven.

It is found in the periplasm. The catalysed reaction is a quinone + formate + H(+) = a quinol + CO2. Its function is as follows. Formate dehydrogenase allows E.coli to use formate as major electron donor during anaerobic respiration, when nitrate is used as electron acceptor. The alpha subunit FdnG contains the formate oxidation site. Electrons are transferred from formate to menaquinone in the gamma subunit (FdnI), through the 4Fe-4S clusters in the beta subunit (FdnH). Formate dehydrogenase-N is part of a system that generates proton motive force, together with the dissimilatory nitrate reductase (Nar). The polypeptide is Formate dehydrogenase, nitrate-inducible, major subunit (fdnG) (Escherichia coli (strain K12)).